The following is a 345-amino-acid chain: Delta(1)-pyrroline-2-carboxylate reductase (345 aa).

Ser47 (charge relay system) is an active-site residue. Residue His48 is the Proton donor of the active site. A substrate-binding site is contributed by Arg52. Residue 121-125 (HFSAL) participates in NADP(+) binding. Residue Thr161 coordinates substrate. Residue 179–181 (DFA) coordinates NADP(+). 187 to 188 (RG) contacts substrate. Glu189 acts as the Charge relay system in catalysis. NADP(+) contacts are provided by residues 230 to 231 (HK) and 305 to 311 (RLPSGRR).

Belongs to the LDH2/MDH2 oxidoreductase family. In terms of assembly, homodimer.

The catalysed reaction is L-proline + NAD(+) = 1-pyrroline-2-carboxylate + NADH + H(+). It catalyses the reaction L-proline + NADP(+) = 1-pyrroline-2-carboxylate + NADPH + H(+). Its function is as follows. Catalyzes the reduction of Delta(1)-pyrroline-2-carboxylate (Pyr2C) to L-proline, using NADPH as the electron donor. Is likely involved in a degradation pathway that converts trans-3-hydroxy-L-proline (t3LHyp) to L-proline, which would allow A.tumefaciens to grow on t3LHyp as a sole carbon source. This chain is Delta(1)-pyrroline-2-carboxylate reductase, found in Agrobacterium fabrum (strain C58 / ATCC 33970) (Agrobacterium tumefaciens (strain C58)).